The primary structure comprises 441 residues: MAEFEIYREYVDKSYEPQKDDIVAVFRITPAEGFTIEDAAGAVAAESSTGTWTSLHPWYDEERVKGLSAKAYDFVDLGDGSSIVRIAYPSELFEPHNMPGLLASIAGNVFGMKRVKGLRLEDLQLPKSFLKDFKGPSKGKEGVKKIFGVADRPIVGTVPKPKVGYSAEEVEKLAYELLSGGMDYIKDDENLTSPAYCRFEERAERIMKVIEKVEAETGEKKSWFANITADVREMERRLKLVAELGNPHVMVDVVITGWGALEYIRDLAEDYDLAIHGHRAMHAAFTRNAKHGISMFVLAKLYRIIGIDQLHIGTAGAGKLEGQKWDTVQNARIFSEVEYTPDEGDAFHLSQNFHHIKPAMPVSSGGLHPGNLEPVIDALGKEIVIQVGGGVLGHPMGAKAGAKAVRQALDAIISAIPLEEHAKQHPELQAALEKWGRVTPI.

Lys160 acts as the Proton acceptor in catalysis. Residue Lys162 coordinates substrate. Mg(2+) contacts are provided by Lys186, Asp188, and Glu189. Lys186 bears the N6-carboxylysine mark. The active-site Proton acceptor is the His278. Residues Arg279, His311, 364-366 (SGG), and 386-389 (QVGG) each bind substrate.

Belongs to the RuBisCO large chain family. Type III subfamily. As to quaternary structure, homodimer. In contrast to form I RuBisCO, the form III RuBisCO is composed solely of large subunits. Requires Mg(2+) as cofactor.

It catalyses the reaction 2 (2R)-3-phosphoglycerate + 2 H(+) = D-ribulose 1,5-bisphosphate + CO2 + H2O. It carries out the reaction D-ribulose 1,5-bisphosphate + O2 = 2-phosphoglycolate + (2R)-3-phosphoglycerate + 2 H(+). Its activity is regulated as follows. Reversibly inhibited by O(2). Its function is as follows. Catalyzes the addition of molecular CO(2) and H(2)O to ribulose 1,5-bisphosphate (RuBP), generating two molecules of 3-phosphoglycerate (3-PGA). Functions in an archaeal AMP degradation pathway, together with AMP phosphorylase and R15P isomerase. This Archaeoglobus fulgidus (strain ATCC 49558 / DSM 4304 / JCM 9628 / NBRC 100126 / VC-16) protein is Ribulose bisphosphate carboxylase.